The primary structure comprises 195 residues: Inner membrane-spanning protein YciB (195 aa).

A run of 5 helical transmembrane segments spans residues 34-54 (IYGATATLILASVIVYGALWL), 65-85 (FTLGACLVLGGLTLAFHEDTF), 88-108 (WKAPLVNWLFALAFAGSHFIG), 131-151 (LNIAWVVFFLVCGFANLYVVF), and 160-180 (FKVFGSLGMTLLFLIGQGLFL).

Belongs to the YciB family.

The protein localises to the cell inner membrane. Plays a role in cell envelope biogenesis, maintenance of cell envelope integrity and membrane homeostasis. In Pseudomonas aeruginosa (strain LESB58), this protein is Inner membrane-spanning protein YciB.